Reading from the N-terminus, the 192-residue chain is A-type ATP synthase subunit E (192 aa).

Belongs to the V-ATPase E subunit family. Has multiple subunits with at least A(3), B(3), C, D, E, F, H, I and proteolipid K(x).

The protein localises to the cell membrane. Component of the A-type ATP synthase that produces ATP from ADP in the presence of a proton gradient across the membrane. This is A-type ATP synthase subunit E from Metallosphaera sedula (strain ATCC 51363 / DSM 5348 / JCM 9185 / NBRC 15509 / TH2).